The primary structure comprises 450 residues: UDP-N-acetylmuramoylalanine--D-glutamate ligase (450 aa).

118-124 contacts ATP; that stretch reads GSNGKTT.

The protein belongs to the MurCDEF family.

It localises to the cytoplasm. The catalysed reaction is UDP-N-acetyl-alpha-D-muramoyl-L-alanine + D-glutamate + ATP = UDP-N-acetyl-alpha-D-muramoyl-L-alanyl-D-glutamate + ADP + phosphate + H(+). It participates in cell wall biogenesis; peptidoglycan biosynthesis. Functionally, cell wall formation. Catalyzes the addition of glutamate to the nucleotide precursor UDP-N-acetylmuramoyl-L-alanine (UMA). This is UDP-N-acetylmuramoylalanine--D-glutamate ligase from Halalkalibacterium halodurans (strain ATCC BAA-125 / DSM 18197 / FERM 7344 / JCM 9153 / C-125) (Bacillus halodurans).